The primary structure comprises 662 residues: Envelope glycoprotein (662 aa).

The signal sequence occupies residues 1 to 34 (MESPTHPKPSKDKTLSWNLVFLVGILFTIDIGMA). The Extracellular segment spans residues 35–606 (NPSPHQVYNV…FNKSPWFTTL (572 aa)). N-linked (GlcNAc...) asparagine; by host glycosylation is found at Asn-43 and Asn-58. Disulfide bonds link Cys-115-Cys-132 and Cys-124-Cys-137. A disordered region spans residues 245 to 279 (AMGPNLVLPDQKPPSRQSQIESRVTPHHSQGNGGT). Positions 258 to 274 (PSRQSQIESRVTPHHSQ) are enriched in polar residues. Asn-286, Asn-322, and Asn-327 each carry an N-linked (GlcNAc...) asparagine; by host glycan. 3 cysteine pairs are disulfide-bonded: Cys-332-Cys-335, Cys-332-Cys-559, and Cys-551-Cys-558. Positions 332–335 (CWLC) match the CXXC motif. Residues Asn-351, Asn-354, Asn-394, Asn-410, and Asn-430 are each glycosylated (N-linked (GlcNAc...) asparagine; by host). Residues 468-488 (ISLTVALMLGGLTVGGIAAGV) are fusion peptide. 2 coiled-coil regions span residues 496-545 (IETA…ILFL) and 555-591 (KEEC…SQQG). The segment at 534-550 (LQNRRGLDILFLQEGGL) is immunosuppression. A CX6CC motif is present at residues 551–559 (CAALKEECC). The chain crosses the membrane as a helical span at residues 607–627 (ISSIMGPLLILLLILLFGPCI). Residue Cys-626 is the site of S-palmitoyl cysteine; by host attachment. The Cytoplasmic portion of the chain corresponds to 628-662 (LNRLVQFVKDRISVVQALILTQQYQQIKQYDPDRP).

In terms of assembly, the mature envelope protein (Env) consists of a trimer of SU-TM heterodimers attached by a labile interchain disulfide bond. Post-translationally, specific enzymatic cleavages in vivo yield mature proteins. Envelope glycoproteins are synthesized as an inactive precursor that is N-glycosylated and processed likely by host cell furin or by a furin-like protease in the Golgi to yield the mature SU and TM proteins. The cleavage site between SU and TM requires the minimal sequence [KR]-X-[KR]-R. The R-peptide is released from the C-terminus of the cytoplasmic tail of the TM protein upon particle formation as a result of proteolytic cleavage by the viral protease. Cleavage of this peptide is required for TM to become fusogenic. In terms of processing, the CXXC motif is highly conserved across a broad range of retroviral envelope proteins. It is thought to participate in the formation of a labile disulfide bond possibly with the CX6CC motif present in the transmembrane protein. Isomerization of the intersubunit disulfide bond to an SU intrachain disulfide bond is thought to occur upon receptor recognition in order to allow membrane fusion. The transmembrane protein is palmitoylated. Post-translationally, the R-peptide is palmitoylated.

It localises to the virion membrane. Its subcellular location is the host cell membrane. The surface protein (SU) attaches the virus to the host cell by binding to its receptor. This interaction triggers the refolding of the transmembrane protein (TM) and is thought to activate its fusogenic potential by unmasking its fusion peptide. Fusion occurs at the host cell plasma membrane. Its function is as follows. The transmembrane protein (TM) acts as a class I viral fusion protein. Under the current model, the protein has at least 3 conformational states: pre-fusion native state, pre-hairpin intermediate state, and post-fusion hairpin state. During viral and target cell membrane fusion, the coiled coil regions (heptad repeats) assume a trimer-of-hairpins structure, positioning the fusion peptide in close proximity to the C-terminal region of the ectodomain. The formation of this structure appears to drive apposition and subsequent fusion of viral and target cell membranes. Membranes fusion leads to delivery of the nucleocapsid into the cytoplasm. The sequence is that of Envelope glycoprotein (env) from Felidae (cat family).